Consider the following 445-residue polypeptide: Phosphoglucosamine mutase (445 aa).

Residue Ser-101 is the Phosphoserine intermediate of the active site. 4 residues coordinate Mg(2+): Ser-101, Asp-240, Asp-242, and Asp-244. Ser-101 is modified (phosphoserine).

It belongs to the phosphohexose mutase family. Requires Mg(2+) as cofactor. In terms of processing, activated by phosphorylation.

It carries out the reaction alpha-D-glucosamine 1-phosphate = D-glucosamine 6-phosphate. In terms of biological role, catalyzes the conversion of glucosamine-6-phosphate to glucosamine-1-phosphate. The chain is Phosphoglucosamine mutase from Pseudomonas fluorescens (strain Pf0-1).